The sequence spans 383 residues: Acetylornithine deacetylase (383 aa).

Zn(2+) is bound at residue His-80. Residue Asp-82 is part of the active site. Asp-112 contributes to the Zn(2+) binding site. Glu-144 is an active-site residue. Glu-145, Glu-169, and His-355 together coordinate Zn(2+).

The protein belongs to the peptidase M20A family. ArgE subfamily. Homodimer. Requires Zn(2+) as cofactor. Co(2+) serves as cofactor. The cofactor is glutathione.

Its subcellular location is the cytoplasm. The enzyme catalyses N(2)-acetyl-L-ornithine + H2O = L-ornithine + acetate. Its pathway is amino-acid biosynthesis; L-arginine biosynthesis; L-ornithine from N(2)-acetyl-L-ornithine (linear): step 1/1. Its function is as follows. Catalyzes the hydrolysis of the amide bond of N(2)-acetylated L-amino acids. Cleaves the acetyl group from N-acetyl-L-ornithine to form L-ornithine, an intermediate in L-arginine biosynthesis pathway, and a branchpoint in the synthesis of polyamines. This Pectobacterium atrosepticum (strain SCRI 1043 / ATCC BAA-672) (Erwinia carotovora subsp. atroseptica) protein is Acetylornithine deacetylase.